A 64-amino-acid chain; its full sequence is UPF0434 protein Bcen_1934 (64 aa).

Belongs to the UPF0434 family.

This is UPF0434 protein Bcen_1934 from Burkholderia orbicola (strain AU 1054).